Here is a 466-residue protein sequence, read N- to C-terminus: Soluble pyridine nucleotide transhydrogenase (466 aa).

Residue 36–45 coordinates FAD; that stretch reads EKESSVGGGC.

The protein belongs to the class-I pyridine nucleotide-disulfide oxidoreductase family. FAD is required as a cofactor.

It localises to the cytoplasm. It carries out the reaction NAD(+) + NADPH = NADH + NADP(+). Functionally, conversion of NADPH, generated by peripheral catabolic pathways, to NADH, which can enter the respiratory chain for energy generation. The sequence is that of Soluble pyridine nucleotide transhydrogenase from Vibrio parahaemolyticus serotype O3:K6 (strain RIMD 2210633).